The sequence spans 507 residues: Bifunctional purine biosynthesis protein PurH (507 aa).

One can recognise an MGS-like domain in the interval 1 to 149 (MSESKRIKTA…KNYNDVIIVA (149 aa)).

Belongs to the PurH family.

The catalysed reaction is (6R)-10-formyltetrahydrofolate + 5-amino-1-(5-phospho-beta-D-ribosyl)imidazole-4-carboxamide = 5-formamido-1-(5-phospho-D-ribosyl)imidazole-4-carboxamide + (6S)-5,6,7,8-tetrahydrofolate. It carries out the reaction IMP + H2O = 5-formamido-1-(5-phospho-D-ribosyl)imidazole-4-carboxamide. Its pathway is purine metabolism; IMP biosynthesis via de novo pathway; 5-formamido-1-(5-phospho-D-ribosyl)imidazole-4-carboxamide from 5-amino-1-(5-phospho-D-ribosyl)imidazole-4-carboxamide (10-formyl THF route): step 1/1. It functions in the pathway purine metabolism; IMP biosynthesis via de novo pathway; IMP from 5-formamido-1-(5-phospho-D-ribosyl)imidazole-4-carboxamide: step 1/1. The polypeptide is Bifunctional purine biosynthesis protein PurH (Bacteroides thetaiotaomicron (strain ATCC 29148 / DSM 2079 / JCM 5827 / CCUG 10774 / NCTC 10582 / VPI-5482 / E50)).